The following is a 110-amino-acid chain: Large ribosomal subunit protein uL24 (110 aa).

Belongs to the universal ribosomal protein uL24 family. Part of the 50S ribosomal subunit.

One of two assembly initiator proteins, it binds directly to the 5'-end of the 23S rRNA, where it nucleates assembly of the 50S subunit. Its function is as follows. One of the proteins that surrounds the polypeptide exit tunnel on the outside of the subunit. This Frankia alni (strain DSM 45986 / CECT 9034 / ACN14a) protein is Large ribosomal subunit protein uL24.